A 209-amino-acid polypeptide reads, in one-letter code: MKNLFLTSSFKDVVPLFTEFESNLQGKTVTFIPTASTVEEVVFYVEAGKKALEKLGLFVVELDVATESLDHIAATLRKNDFIYVTGGNTFFLLQELKRTGADKLILEEIAAGKLYIGESAGAVITSPNIAYIQSMDSPKKAEQLTNYDALNLVDFCTLPHYNNIPFKKITQKIVADYTKSLKMHPISNHEAILVRDEEVITKLANGKTD.

Catalysis depends on charge relay system residues Ser119 and His160.

The protein belongs to the peptidase S51 family.

This is an uncharacterized protein from Listeria innocua serovar 6a (strain ATCC BAA-680 / CLIP 11262).